The following is a 186-amino-acid chain: Putative thiamine-phosphate synthase 2 (186 aa).

Residues 35–39 and asparagine 67 each bind 4-amino-2-methyl-5-(diphosphooxymethyl)pyrimidine; that span reads QLREK. Position 68 (glutamate 68) interacts with Mg(2+). Serine 105 serves as a coordination point for 4-amino-2-methyl-5-(diphosphooxymethyl)pyrimidine. A 2-[(2R,5Z)-2-carboxy-4-methylthiazol-5(2H)-ylidene]ethyl phosphate-binding site is contributed by 131 to 133; sequence TSS. Histidine 134 is a 4-amino-2-methyl-5-(diphosphooxymethyl)pyrimidine binding site. 2-[(2R,5Z)-2-carboxy-4-methylthiazol-5(2H)-ylidene]ethyl phosphate is bound by residues glycine 161 and 181–182; that span reads IS.

This sequence belongs to the thiamine-phosphate synthase family. It depends on Mg(2+) as a cofactor.

The catalysed reaction is 2-[(2R,5Z)-2-carboxy-4-methylthiazol-5(2H)-ylidene]ethyl phosphate + 4-amino-2-methyl-5-(diphosphooxymethyl)pyrimidine + 2 H(+) = thiamine phosphate + CO2 + diphosphate. The enzyme catalyses 2-(2-carboxy-4-methylthiazol-5-yl)ethyl phosphate + 4-amino-2-methyl-5-(diphosphooxymethyl)pyrimidine + 2 H(+) = thiamine phosphate + CO2 + diphosphate. It catalyses the reaction 4-methyl-5-(2-phosphooxyethyl)-thiazole + 4-amino-2-methyl-5-(diphosphooxymethyl)pyrimidine + H(+) = thiamine phosphate + diphosphate. Its pathway is cofactor biosynthesis; thiamine diphosphate biosynthesis; thiamine phosphate from 4-amino-2-methyl-5-diphosphomethylpyrimidine and 4-methyl-5-(2-phosphoethyl)-thiazole: step 1/1. In terms of biological role, condenses 4-methyl-5-(beta-hydroxyethyl)thiazole monophosphate (THZ-P) and 2-methyl-4-amino-5-hydroxymethyl pyrimidine pyrophosphate (HMP-PP) to form thiamine monophosphate (TMP). This Aquifex aeolicus (strain VF5) protein is Putative thiamine-phosphate synthase 2 (thiE2).